We begin with the raw amino-acid sequence, 509 residues long: Lanosterol 14-alpha demethylase (509 aa).

Residues 30–50 traverse the membrane as a helical segment; the sequence is GNLLSMLLIACAFTLSLVYLI. Cysteine 455 is a binding site for heme.

This sequence belongs to the cytochrome P450 family. It depends on heme as a cofactor. In terms of processing, ubiquitinated by MARCHF6, leading to proteasomal degradation. As to expression, ubiquitously expressed with highest levels in testis, ovary, adrenal, prostate, liver, kidney and lung.

It is found in the endoplasmic reticulum membrane. The protein localises to the microsome membrane. The enzyme catalyses a 14alpha-methyl steroid + 3 reduced [NADPH--hemoprotein reductase] + 3 O2 = a Delta(14) steroid + formate + 3 oxidized [NADPH--hemoprotein reductase] + 4 H2O + 4 H(+). It carries out the reaction lanosterol + 3 reduced [NADPH--hemoprotein reductase] + 3 O2 = 4,4-dimethyl-5alpha-cholesta-8,14,24-trien-3beta-ol + formate + 3 oxidized [NADPH--hemoprotein reductase] + 4 H2O + 4 H(+). It catalyses the reaction 24,25-dihydrolanosterol + 3 reduced [NADPH--hemoprotein reductase] + 3 O2 = 4,4-dimethyl-8,14-cholestadien-3beta-ol + formate + 3 oxidized [NADPH--hemoprotein reductase] + 4 H2O + 4 H(+). The catalysed reaction is a 14alpha-methyl steroid + reduced [NADPH--hemoprotein reductase] + O2 = a 14alpha-hydroxymethyl steroid + oxidized [NADPH--hemoprotein reductase] + H2O + H(+). The enzyme catalyses a 14alpha-hydroxymethyl steroid + reduced [NADPH--hemoprotein reductase] + O2 = a 14alpha-formyl steroid + oxidized [NADPH--hemoprotein reductase] + 2 H2O + H(+). It carries out the reaction a 14alpha-formyl steroid + reduced [NADPH--hemoprotein reductase] + O2 = a Delta(14) steroid + formate + oxidized [NADPH--hemoprotein reductase] + H2O + 2 H(+). It catalyses the reaction lanosterol + reduced [NADPH--hemoprotein reductase] + O2 = 32-hydroxylanosterol + oxidized [NADPH--hemoprotein reductase] + H2O + H(+). The catalysed reaction is 32-hydroxylanosterol + reduced [NADPH--hemoprotein reductase] + O2 = 32-oxolanosterol + oxidized [NADPH--hemoprotein reductase] + 2 H2O + H(+). The enzyme catalyses 32-oxolanosterol + reduced [NADPH--hemoprotein reductase] + O2 = 4,4-dimethyl-5alpha-cholesta-8,14,24-trien-3beta-ol + formate + oxidized [NADPH--hemoprotein reductase] + H2O + 2 H(+). It carries out the reaction 24,25-dihydrolanosterol + reduced [NADPH--hemoprotein reductase] + O2 = 32-hydroxy-24,25-dihydrolanosterol + oxidized [NADPH--hemoprotein reductase] + H2O + H(+). It catalyses the reaction 32-hydroxy-24,25-dihydrolanosterol + reduced [NADPH--hemoprotein reductase] + O2 = 32-oxo-24,25-dihydrolanosterol + oxidized [NADPH--hemoprotein reductase] + 2 H2O + H(+). The catalysed reaction is 32-oxo-24,25-dihydrolanosterol + reduced [NADPH--hemoprotein reductase] + O2 = 4,4-dimethyl-8,14-cholestadien-3beta-ol + formate + oxidized [NADPH--hemoprotein reductase] + H2O + 2 H(+). Its pathway is steroid biosynthesis; zymosterol biosynthesis; zymosterol from lanosterol: step 1/6. Inhibited by azalanstat. Inhibited by azole antifungal agents ketoconazole, itraconazole and fluconazole. Its function is as follows. Sterol 14alpha-demethylase that plays a critical role in the cholesterol biosynthesis pathway, being cholesterol the major sterol component in mammalian membranes as well as a precursor for bile acid and steroid hormone synthesis. Cytochrome P450 monooxygenase that catalyzes the three-step oxidative removal of the 14alpha-methyl group (C-32) of sterols such as lanosterol (lanosta-8,24-dien-3beta-ol) and 24,25-dihydrolanosterol (DHL) in the form of formate, and converts the sterols to 4,4-dimethyl-5alpha-cholesta-8,14,24-trien-3beta-ol and 4,4-dimethyl-8,14-cholestadien-3beta-ol, respectively, which are intermediates of cholesterol biosynthesis. Can also demethylate substrates not intrinsic to mammals, such as eburicol (24-methylene-24,25-dihydrolanosterol), but at a lower rate than DHL. This chain is Lanosterol 14-alpha demethylase, found in Homo sapiens (Human).